The primary structure comprises 519 residues: Glutamate--cysteine ligase (519 aa).

The protein belongs to the glutamate--cysteine ligase type 1 family. Type 1 subfamily.

It carries out the reaction L-cysteine + L-glutamate + ATP = gamma-L-glutamyl-L-cysteine + ADP + phosphate + H(+). The protein operates within sulfur metabolism; glutathione biosynthesis; glutathione from L-cysteine and L-glutamate: step 1/2. The protein is Glutamate--cysteine ligase of Photorhabdus laumondii subsp. laumondii (strain DSM 15139 / CIP 105565 / TT01) (Photorhabdus luminescens subsp. laumondii).